Reading from the N-terminus, the 446-residue chain is Exodeoxyribonuclease 7 large subunit (446 aa).

The protein belongs to the XseA family. Heterooligomer composed of large and small subunits.

The protein localises to the cytoplasm. The catalysed reaction is Exonucleolytic cleavage in either 5'- to 3'- or 3'- to 5'-direction to yield nucleoside 5'-phosphates.. In terms of biological role, bidirectionally degrades single-stranded DNA into large acid-insoluble oligonucleotides, which are then degraded further into small acid-soluble oligonucleotides. The sequence is that of Exodeoxyribonuclease 7 large subunit from Vibrio cholerae serotype O1 (strain ATCC 39541 / Classical Ogawa 395 / O395).